The primary structure comprises 38 residues: Bacteriocin BAC79 (38 aa).

Its activity is regulated as follows. The antimicrobial activity of BAC79 was completely lost after treatment with enzymes trypsin, pepsin, proteinase-K, and carboxypeptidase, while there was no loss of activity with either amylase or lipase. Its function is as follows. Has antibacterial activity against a wide spectrum of Gram-positive and Gram-negative bacteria, including L.monocytogenes which is inhibited through disruption of the cell membrane. This is Bacteriocin BAC79 from Weissella confusa (Lactobacillus confusus).